Reading from the N-terminus, the 469-residue chain is Glutamate--tRNA ligase (469 aa).

A 'HIGH' region motif is present at residues 11 to 21 (PSPTGFIHLGN). The span at 118–131 (GEKPRYDGTWRPEP) shows a compositional bias: basic and acidic residues. A disordered region spans residues 118–138 (GEKPRYDGTWRPEPGKVLPEP). Residues 243 to 247 (KMSKR) carry the 'KMSKS' region motif. ATP is bound at residue Lys246.

It belongs to the class-I aminoacyl-tRNA synthetase family. Glutamate--tRNA ligase type 1 subfamily. Monomer.

The protein localises to the cytoplasm. The enzyme catalyses tRNA(Glu) + L-glutamate + ATP = L-glutamyl-tRNA(Glu) + AMP + diphosphate. Its function is as follows. Catalyzes the attachment of glutamate to tRNA(Glu) in a two-step reaction: glutamate is first activated by ATP to form Glu-AMP and then transferred to the acceptor end of tRNA(Glu). This Burkholderia vietnamiensis (strain G4 / LMG 22486) (Burkholderia cepacia (strain R1808)) protein is Glutamate--tRNA ligase.